Consider the following 418-residue polypeptide: NADH-quinone oxidoreductase subunit D (418 aa).

It belongs to the complex I 49 kDa subunit family. As to quaternary structure, NDH-1 is composed of 14 different subunits. Subunits NuoB, C, D, E, F, and G constitute the peripheral sector of the complex.

It localises to the cell inner membrane. The catalysed reaction is a quinone + NADH + 5 H(+)(in) = a quinol + NAD(+) + 4 H(+)(out). NDH-1 shuttles electrons from NADH, via FMN and iron-sulfur (Fe-S) centers, to quinones in the respiratory chain. The immediate electron acceptor for the enzyme in this species is believed to be ubiquinone. Couples the redox reaction to proton translocation (for every two electrons transferred, four hydrogen ions are translocated across the cytoplasmic membrane), and thus conserves the redox energy in a proton gradient. This Neisseria meningitidis serogroup A / serotype 4A (strain DSM 15465 / Z2491) protein is NADH-quinone oxidoreductase subunit D.